The sequence spans 110 residues: Hydrogenase maturation factor HypA (110 aa).

Residue H2 participates in Ni(2+) binding. C73, C76, C87, and C89 together coordinate Zn(2+).

It belongs to the HypA/HybF family.

Its function is as follows. Involved in the maturation of [NiFe] hydrogenases. Required for nickel insertion into the metal center of the hydrogenase. The protein is Hydrogenase maturation factor HypA of Archaeoglobus fulgidus (strain ATCC 49558 / DSM 4304 / JCM 9628 / NBRC 100126 / VC-16).